Consider the following 364-residue polypeptide: Putative galactoside 2-alpha-L-fucosyltransferase svh-11 (364 aa).

Topologically, residues 1-19 (MRLFHFLKFLTINNFSRYC) are cytoplasmic. The chain crosses the membrane as a helical; Signal-anchor for type II membrane protein span at residues 20-42 (LKIVKVHIIWITIICIIYFNWRF). Residues 43–364 (KKLDFMAIPY…SANSFTVVRS (322 aa)) are Lumenal-facing. Residues Asn60 and Asn128 are each glycosylated (N-linked (GlcNAc...) asparagine).

It belongs to the glycosyltransferase 11 family.

The protein resides in the golgi apparatus. The protein localises to the golgi stack membrane. Its function is as follows. Mediates the transfer of fucose to the terminal galactose on glycan chains of cell surface glycoproteins and glycolipids. Required for axon regeneration after injury. The chain is Putative galactoside 2-alpha-L-fucosyltransferase svh-11 from Caenorhabditis elegans.